The chain runs to 110 residues: Flagellar hook-basal body complex protein FliE (110 aa).

The protein belongs to the FliE family.

The protein localises to the bacterial flagellum basal body. The chain is Flagellar hook-basal body complex protein FliE from Pseudomonas entomophila (strain L48).